A 711-amino-acid polypeptide reads, in one-letter code: Polyribonucleotide nucleotidyltransferase (711 aa).

Asp487 and Asp493 together coordinate Mg(2+). A KH domain is found at 554–613; the sequence is PRIHTMKISAEKIKDVIGKGGAVIRALTEETGTTIEIEDDGTIKIAATEGAAAKEAIRRI. The region spanning 623-691 is the S1 motif domain; that stretch reads GRIYTGKVAR…RQGRVRLSMK (69 aa). Residues 691–711 are disordered; it reads KEAVEKPAEEAAAEAPAAKEE.

Belongs to the polyribonucleotide nucleotidyltransferase family. Component of the RNA degradosome, which is a multiprotein complex involved in RNA processing and mRNA degradation. The cofactor is Mg(2+).

The protein resides in the cytoplasm. The enzyme catalyses RNA(n+1) + phosphate = RNA(n) + a ribonucleoside 5'-diphosphate. Its function is as follows. Involved in mRNA degradation. Catalyzes the phosphorolysis of single-stranded polyribonucleotides processively in the 3'- to 5'-direction. This Vibrio parahaemolyticus serotype O3:K6 (strain RIMD 2210633) protein is Polyribonucleotide nucleotidyltransferase.